Here is a 296-residue protein sequence, read N- to C-terminus: Adrenocorticotropic hormone receptor (296 aa).

Over 1 to 23 (MKHIINSYEHTNDTARNNSDCPD) the chain is Extracellular. 2 N-linked (GlcNAc...) asparagine glycosylation sites follow: Asn-12 and Asn-17. 2 disulfide bridges follow: Cys-21/Cys-253 and Cys-245/Cys-251. The chain crosses the membrane as a helical span at residues 24-49 (VVLPEEIFFTISVIGILENLIVLLAV). Topologically, residues 50–58 (IKNKNLQSP) are cytoplasmic. A helical membrane pass occupies residues 59–79 (MYFFICSLAISDMLGSLYKIL). Topologically, residues 80 to 104 (ENILIMFRNMGYLKPRGSFESTADD) are extracellular. The helical transmembrane segment at 105 to 126 (IIDCMFILSLLGSIFSLSVIAA) threads the bilayer. Residues 127 to 147 (DRYITIFHALQYHSIVTMRRT) are Cytoplasmic-facing. Residues 148-168 (IITLTIIWMFCTGSGITMVIF) form a helical membrane-spanning segment. Residues 169–180 (SHHIPTVLTFTS) are Extracellular-facing. The chain crosses the membrane as a helical span at residues 181-199 (LFPLMLVFILCLYIHMFLL). At 200-217 (ARSHARKISTLPRTNMKG) the chain is on the cytoplasmic side. A helical transmembrane segment spans residues 218-244 (AMTLTILLGVFIFCWAPFVLHVLLMTF). The Extracellular segment spans residues 245-256 (CPNNPYCVCYMS). A helical transmembrane segment spans residues 257-278 (LFQVNGMLIMCNAVIDPFIYAF). The Cytoplasmic portion of the chain corresponds to 279-296 (RSPELRDAFKRMLFCNRY). Cys-293 carries S-palmitoyl cysteine lipidation.

This sequence belongs to the G-protein coupled receptor 1 family. As to quaternary structure, homodimer. Interacts with corticotropin (ACTH). Interacts with MRAP; this interaction targets MC2R to the plasma membrane. Interacts with MRAP2; competing with MRAP for binding to MC2R and impairing the binding of corticotropin (ACTH). Post-translationally, ubiquitinated by MGRN1 that may be involved in post-endocytic trafficking and/or degradation of internalized receptor.

It localises to the cell membrane. Functionally, hormone receptor primarily expressed in adrenal cortex that plays a key role in regulating adrenocortical function. Upon corticotropin (ACTH) binding, facilitates the release of adrenal glucocorticoids, including cortisol and corticosterone. In addition, MC2R is required for fetal and neonatal adrenal gland development. Mechanistically, activates adenylate cyclase (cAMP), the MAPK cascade as well as the cAMP-dependent protein kinase A pathway leading to steroidogenic factor 1/NR5A1-mediated transcriptional activation. This Mus musculus (Mouse) protein is Adrenocorticotropic hormone receptor (Mc2r).